A 496-amino-acid chain; its full sequence is Glycylpeptide N-tetradecanoyltransferase 1 (496 aa).

Residues 1–82 are disordered; that stretch reads MADESETAVK…STQDQPVKMT (82 aa). Phosphoserine occurs at positions 31 and 47. The span at 55-66 shows a compositional bias: basic residues; the sequence is KKKKKKQKKKKE. Residue serine 83 is modified to Phosphoserine. Residues glutamine 118, phenylalanine 119, tryptophan 120, phenylalanine 247, leucine 248, cysteine 249, valine 250, serine 256, arginine 258, valine 259, and alanine 260 each contribute to the tetradecanoyl-CoA site.

This sequence belongs to the NMT family. In terms of tissue distribution, ubiquitous.

The protein localises to the cytoplasm. It is found in the cytosol. The protein resides in the membrane. It catalyses the reaction N-terminal glycyl-[protein] + tetradecanoyl-CoA = N-tetradecanoylglycyl-[protein] + CoA + H(+). The enzyme catalyses N-terminal glycyl-L-lysyl-[protein] + tetradecanoyl-CoA = N-terminal glycyl-(N(6)-tetradecanoyl)-L-lysyl-[protein] + CoA + H(+). Its function is as follows. Adds a myristoyl group to the N-terminal glycine residue of certain cellular and viral proteins. Also able to mediate N-terminal lysine myristoylation of proteins: catalyzes myristoylation of ARF6 on both 'Gly-2' and 'Lys-3'. Lysine myristoylation is required to maintain ARF6 on membranes during the GTPase cycle. Required for normal embryogenesis. In Mus musculus (Mouse), this protein is Glycylpeptide N-tetradecanoyltransferase 1.